The primary structure comprises 549 residues: Undecaprenyl phosphate-alpha-4-amino-4-deoxy-L-arabinose arabinosyl transferase 1 (549 aa).

12 helical membrane-spanning segments follow: residues 9–29 (LLLI…GLWI), 80–102 (LFGV…YLLA), 112–132 (SLAS…AGYA), 133–153 (NLDP…WFTF), 176–196 (FMTK…PYAI), 204–224 (LLIY…PWAL), 257–277 (WWYY…LLPA), 290–310 (SSGF…LSKG), 312–332 (LPAY…NTLV), 342–362 (LLAF…LALV), 377–397 (HLVL…LQAM), and 402–422 (LWAA…AALP).

Belongs to the glycosyltransferase 83 family.

It localises to the cell inner membrane. The catalysed reaction is 4-amino-4-deoxy-alpha-L-arabinopyranosyl di-trans,octa-cis-undecaprenyl phosphate + lipid IVA = lipid IIA + di-trans,octa-cis-undecaprenyl phosphate.. Its pathway is lipopolysaccharide metabolism; 4-amino-4-deoxy-beta-L-arabinose-lipid A biosynthesis. In terms of biological role, catalyzes the transfer of the L-Ara4N moiety of the glycolipid undecaprenyl phosphate-alpha-L-Ara4N to lipid A. The modified arabinose is attached to lipid A and is required for resistance to polymyxin and cationic antimicrobial peptides. This is Undecaprenyl phosphate-alpha-4-amino-4-deoxy-L-arabinose arabinosyl transferase 1 from Pseudomonas fluorescens (strain ATCC BAA-477 / NRRL B-23932 / Pf-5).